The following is a 239-amino-acid chain: Leucine-rich repeat-containing protein 57 (239 aa).

Gly2 carries N-myristoyl glycine lipidation. LRR repeat units follow at residues 39 to 60 (NLRT…LIGK), 63 to 84 (LLKS…ICNL), 86 to 107 (KLET…FGQL), 109 to 131 (ALKT…CSLR), 132 to 153 (HLDV…VGEL), 154 to 175 (QVIE…ISCC), 177 to 197 (RLKI…PQSI), and 202 to 222 (QICL…RELE).

The protein resides in the membrane. This chain is Leucine-rich repeat-containing protein 57 (LRRC57), found in Homo sapiens (Human).